The primary structure comprises 361 residues: Phosphoserine aminotransferase (361 aa).

L-glutamate is bound at residue Arg-42. Pyridoxal 5'-phosphate-binding positions include 76-77 (AT), Trp-102, Thr-152, Asp-172, and Gln-195. Lys-196 is subject to N6-(pyridoxal phosphate)lysine. 237 to 238 (NT) contributes to the pyridoxal 5'-phosphate binding site.

It belongs to the class-V pyridoxal-phosphate-dependent aminotransferase family. SerC subfamily. In terms of assembly, homodimer. Requires pyridoxal 5'-phosphate as cofactor.

The protein resides in the cytoplasm. The enzyme catalyses O-phospho-L-serine + 2-oxoglutarate = 3-phosphooxypyruvate + L-glutamate. It catalyses the reaction 4-(phosphooxy)-L-threonine + 2-oxoglutarate = (R)-3-hydroxy-2-oxo-4-phosphooxybutanoate + L-glutamate. The protein operates within amino-acid biosynthesis; L-serine biosynthesis; L-serine from 3-phospho-D-glycerate: step 2/3. It participates in cofactor biosynthesis; pyridoxine 5'-phosphate biosynthesis; pyridoxine 5'-phosphate from D-erythrose 4-phosphate: step 3/5. Catalyzes the reversible conversion of 3-phosphohydroxypyruvate to phosphoserine and of 3-hydroxy-2-oxo-4-phosphonooxybutanoate to phosphohydroxythreonine. This chain is Phosphoserine aminotransferase, found in Stenotrophomonas maltophilia (strain K279a).